A 91-amino-acid polypeptide reads, in one-letter code: Small ribosomal subunit protein uS15 (91 aa).

It belongs to the universal ribosomal protein uS15 family. As to quaternary structure, part of the 30S ribosomal subunit. Forms a bridge to the 50S subunit in the 70S ribosome, contacting the 23S rRNA.

Its function is as follows. One of the primary rRNA binding proteins, it binds directly to 16S rRNA where it helps nucleate assembly of the platform of the 30S subunit by binding and bridging several RNA helices of the 16S rRNA. Forms an intersubunit bridge (bridge B4) with the 23S rRNA of the 50S subunit in the ribosome. This Rickettsia canadensis (strain McKiel) protein is Small ribosomal subunit protein uS15.